The following is a 175-amino-acid chain: NAD(P)H-quinone oxidoreductase subunit J (175 aa).

Belongs to the complex I 30 kDa subunit family. As to quaternary structure, NDH-1 can be composed of about 15 different subunits; different subcomplexes with different compositions have been identified which probably have different functions.

The protein localises to the cellular thylakoid membrane. It carries out the reaction a plastoquinone + NADH + (n+1) H(+)(in) = a plastoquinol + NAD(+) + n H(+)(out). It catalyses the reaction a plastoquinone + NADPH + (n+1) H(+)(in) = a plastoquinol + NADP(+) + n H(+)(out). Functionally, NDH-1 shuttles electrons from an unknown electron donor, via FMN and iron-sulfur (Fe-S) centers, to quinones in the respiratory and/or the photosynthetic chain. The immediate electron acceptor for the enzyme in this species is believed to be plastoquinone. Couples the redox reaction to proton translocation, and thus conserves the redox energy in a proton gradient. Cyanobacterial NDH-1 also plays a role in inorganic carbon-concentration. This chain is NAD(P)H-quinone oxidoreductase subunit J, found in Nostoc sp. (strain PCC 7120 / SAG 25.82 / UTEX 2576).